The chain runs to 384 residues: Deoxyguanosinetriphosphate triphosphohydrolase-like protein (384 aa).

The HD domain occupies 62-198; sequence RLTHSLEVST…AALADDISYI (137 aa).

Belongs to the dGTPase family. Type 2 subfamily.

The sequence is that of Deoxyguanosinetriphosphate triphosphohydrolase-like protein from Rickettsia rickettsii (strain Iowa).